The sequence spans 132 residues: Small ribosomal subunit protein uS11 (132 aa).

The protein belongs to the universal ribosomal protein uS11 family. Part of the 30S ribosomal subunit.

Located on the platform of the 30S subunit. This Thermoplasma volcanium (strain ATCC 51530 / DSM 4299 / JCM 9571 / NBRC 15438 / GSS1) protein is Small ribosomal subunit protein uS11.